A 328-amino-acid polypeptide reads, in one-letter code: Ribosomal RNA large subunit methyltransferase F (328 aa).

The disordered stretch occupies residues 1–38 (MTDTPKPPRKKPQRPAKPAAPREKATLHPRNRHQGHYD).

This sequence belongs to the methyltransferase superfamily. METTL16/RlmF family.

The protein resides in the cytoplasm. The enzyme catalyses adenosine(1618) in 23S rRNA + S-adenosyl-L-methionine = N(6)-methyladenosine(1618) in 23S rRNA + S-adenosyl-L-homocysteine + H(+). Functionally, specifically methylates the adenine in position 1618 of 23S rRNA. This is Ribosomal RNA large subunit methyltransferase F from Pseudomonas syringae pv. tomato (strain ATCC BAA-871 / DC3000).